The sequence spans 450 residues: Tol-Pal system protein TolB (450 aa).

Positions 1 to 47 (MRKLWAPNWLSAKRHHANQAATRLIGRHALMAWLAAALALSAGAAQA) are cleaved as a signal peptide.

It belongs to the TolB family. In terms of assembly, the Tol-Pal system is composed of five core proteins: the inner membrane proteins TolA, TolQ and TolR, the periplasmic protein TolB and the outer membrane protein Pal. They form a network linking the inner and outer membranes and the peptidoglycan layer.

The protein resides in the periplasm. In terms of biological role, part of the Tol-Pal system, which plays a role in outer membrane invagination during cell division and is important for maintaining outer membrane integrity. The chain is Tol-Pal system protein TolB from Cupriavidus pinatubonensis (strain JMP 134 / LMG 1197) (Cupriavidus necator (strain JMP 134)).